A 271-amino-acid polypeptide reads, in one-letter code: uncharacterized protein (271 aa).

A signal peptide spans 1–22 (MIHSKRLKLCLCLIILSVFIGA). C23 carries N-palmitoyl cysteine lipidation. Residue C23 is the site of S-diacylglycerol cysteine attachment.

The protein belongs to the staphylococcal tandem lipoprotein family.

The protein resides in the cell membrane. This is an uncharacterized protein from Staphylococcus aureus (strain MW2).